A 123-amino-acid polypeptide reads, in one-letter code: Ribonuclease P protein component (123 aa).

The protein belongs to the RnpA family. As to quaternary structure, consists of a catalytic RNA component (M1 or rnpB) and a protein subunit.

The catalysed reaction is Endonucleolytic cleavage of RNA, removing 5'-extranucleotides from tRNA precursor.. RNaseP catalyzes the removal of the 5'-leader sequence from pre-tRNA to produce the mature 5'-terminus. It can also cleave other RNA substrates such as 4.5S RNA. The protein component plays an auxiliary but essential role in vivo by binding to the 5'-leader sequence and broadening the substrate specificity of the ribozyme. The protein is Ribonuclease P protein component of Streptomyces griseus subsp. griseus (strain JCM 4626 / CBS 651.72 / NBRC 13350 / KCC S-0626 / ISP 5235).